A 485-amino-acid polypeptide reads, in one-letter code: Glutamyl-tRNA(Gln) amidotransferase subunit A (485 aa).

Residues K76 and S155 each act as charge relay system in the active site. The active-site Acyl-ester intermediate is the S179.

Belongs to the amidase family. GatA subfamily. As to quaternary structure, heterotrimer of A, B and C subunits.

It carries out the reaction L-glutamyl-tRNA(Gln) + L-glutamine + ATP + H2O = L-glutaminyl-tRNA(Gln) + L-glutamate + ADP + phosphate + H(+). Functionally, allows the formation of correctly charged Gln-tRNA(Gln) through the transamidation of misacylated Glu-tRNA(Gln) in organisms which lack glutaminyl-tRNA synthetase. The reaction takes place in the presence of glutamine and ATP through an activated gamma-phospho-Glu-tRNA(Gln). This is Glutamyl-tRNA(Gln) amidotransferase subunit A from Marinobacter nauticus (strain ATCC 700491 / DSM 11845 / VT8) (Marinobacter aquaeolei).